Here is a 901-residue protein sequence, read N- to C-terminus: Pantothenate kinase 2 (901 aa).

Over residues 1 to 10 the composition is skewed to acidic residues; the sequence is MAGQEDEYDP. A disordered region spans residues 1-50; that stretch reads MAGQEDEYDPILDNKREAEAKSQVSVAADKNMAPSTSGTPIHRSGSRPQL. A pantothenate kinase region spans residues 1-466; that stretch reads MAGQEDEYDP…LGDLDEKISW (466 aa). Residues 467–901 are 4'-phosphopantetheine phosphatase; that stretch reads MEKFVRRGTE…CVCRYEPPSL (435 aa). Mn(2+)-binding residues include Asp-731, Asn-732, and Asp-767. Residues 851–855 carry the Subfamily II EGMGR motif motif; it reads EGMGR.

In the N-terminal section; belongs to the type II pantothenate kinase family. It in the C-terminal section; belongs to the damage-control phosphatase family. Phosphopantetheine phosphatase II subfamily. Requires Mn(2+) as cofactor. The cofactor is Ni(2+). As to expression, highly expressed in leaves and developing seeds. Expressed in roots, stems and flowers.

It carries out the reaction (R)-pantothenate + ATP = (R)-4'-phosphopantothenate + ADP + H(+). The catalysed reaction is (R)-4'-phosphopantothenate + H2O = (R)-pantothenate + phosphate. The enzyme catalyses (R)-4'-phosphopantetheine + H2O = (R)-pantetheine + phosphate. It catalyses the reaction (R)-4'-phosphopantetheine sulfonate + H2O = (R)-pantetheine sulfonate + phosphate. Its pathway is cofactor biosynthesis; coenzyme A biosynthesis; CoA from (R)-pantothenate: step 1/5. Its activity is regulated as follows. Activity is strongly promoted by Co(2+), Ni(2+) and Mn(2+). Activity is inhibited by EDTA. Catalyzes the phosphorylation of pantothenate the first step in CoA biosynthesis. May play a role in the physiological regulation of the intracellular CoA concentration. Functionally redudant with PANK1. The phosphatase activity shows preference for normal or oxidatively damaged intermediates of 4'-phosphopantetheine, which provides strong indirect evidence that the phosphatase activity pre-empts damage in the CoA pathway. Hydrolyzing excess 4'-phosphopantetheine could constitute a directed overflow mechanism to prevent its oxidation to the S-sulfonate, sulfonate, or other forms. Hydrolyzing 4'-phosphopantetheine sulfonate or S-sulfonate would forestall their conversion to inactive forms of CoA and acyl carrier protein. This Arabidopsis thaliana (Mouse-ear cress) protein is Pantothenate kinase 2 (PANK2).